The primary structure comprises 300 residues: uncharacterized protein (300 aa).

Serine 49 (charge relay system) is an active-site residue. Residue tyrosine 137 is the Proton donor of the active site. Lysine 165 (schiff-base intermediate with substrate) is an active-site residue.

The protein belongs to the DapA family. Homotetramer.

It is found in the cytoplasm. Upon expression in E.coli complements a dapA deletion mutation, but this may not be its physiological function. This is an uncharacterized protein from Rhizobium meliloti (Ensifer meliloti).